Reading from the N-terminus, the 32-residue chain is Periplasmic [NiFeSe] hydrogenase small subunit (32 aa).

2 residues coordinate [4Fe-4S] cluster: Cys-18 and Cys-21.

This sequence belongs to the [NiFe]/[NiFeSe] hydrogenase small subunit family. In terms of assembly, heterodimer of a large and a small subunit. [3Fe-4S] cluster serves as cofactor. The cofactor is [4Fe-4S] cluster.

The protein resides in the periplasm. It catalyses the reaction H2 + A = AH2. The chain is Periplasmic [NiFeSe] hydrogenase small subunit from Desulfomicrobium norvegicum (strain DSM 1741 / NCIMB 8310) (Desulfovibrio baculatus (strain Norway 4)).